Here is an 89-residue protein sequence, read N- to C-terminus: Putative regulatory protein Dalk_1931 (89 aa).

This sequence belongs to the RemA family.

The polypeptide is Putative regulatory protein Dalk_1931 (Desulfatibacillum aliphaticivorans).